The sequence spans 315 residues: Large ribosomal subunit protein uL29m (315 aa).

The protein belongs to the universal ribosomal protein uL29 family. As to quaternary structure, component of the mitochondrial large ribosomal subunit. Mature mitochondrial ribosomes consist of a small (37S) and a large (54S) subunit. The 37S subunit contains at least 33 different proteins and 1 molecule of RNA (15S). The 54S subunit contains at least 45 different proteins and 1 molecule of RNA (21S).

The protein resides in the mitochondrion. The sequence is that of Large ribosomal subunit protein uL29m (MRPL4) from Candida glabrata (strain ATCC 2001 / BCRC 20586 / JCM 3761 / NBRC 0622 / NRRL Y-65 / CBS 138) (Yeast).